The sequence spans 218 residues: Deoxyribose-phosphate aldolase (218 aa).

Catalysis depends on Asp-92, which acts as the Proton donor/acceptor. Catalysis depends on Lys-156, which acts as the Schiff-base intermediate with acetaldehyde. Lys-185 serves as the catalytic Proton donor/acceptor.

Belongs to the DeoC/FbaB aldolase family. DeoC type 1 subfamily.

It is found in the cytoplasm. The enzyme catalyses 2-deoxy-D-ribose 5-phosphate = D-glyceraldehyde 3-phosphate + acetaldehyde. It functions in the pathway carbohydrate degradation; 2-deoxy-D-ribose 1-phosphate degradation; D-glyceraldehyde 3-phosphate and acetaldehyde from 2-deoxy-alpha-D-ribose 1-phosphate: step 2/2. Its function is as follows. Catalyzes a reversible aldol reaction between acetaldehyde and D-glyceraldehyde 3-phosphate to generate 2-deoxy-D-ribose 5-phosphate. The polypeptide is Deoxyribose-phosphate aldolase (Desulfitobacterium hafniense (strain Y51)).